The sequence spans 152 residues: Photosystem II extrinsic protein U, chloroplastic (152 aa).

A chloroplast-targeting transit peptide spans 1-35 (MDSTAFVGAAAPLRVAAAARSTICMAAADDKPVVS). The transit peptide at 36–59 (RRAALTGAAAAALAAVAGSLPALA) directs the protein to the thylakoid.

It belongs to the PsbU family. In terms of assembly, PSII is composed of 1 copy each of membrane proteins PsbA, PsbB, PsbC, PsbD, PsbE, PsbF, PsbH, PsbI, PsbJ, PsbK, PsbL, PsbM, PsbT, PsbX, PsbY, PsbZ, Psb30/Ycf12, at least 3 peripheral proteins of the oxygen-evolving complex and a large number of cofactors. It forms dimeric complexes. The oxygen-evolving complex in red algae is composed of PsbO (OEC33), PsbQ', cytochrome c-550 and PsbU. In terms of processing, predicted to be translocated into the thylakoid lumen by the Tat system.

The protein localises to the plastid. Its subcellular location is the chloroplast thylakoid membrane. Functionally, one of the extrinsic, lumenal subunits of photosystem II (PSII). PSII is a light-driven water plastoquinone oxidoreductase, using light energy to abstract electrons from H(2)O, generating a proton gradient subsequently used for ATP formation. The extrinsic proteins stabilize the structure of photosystem II oxygen-evolving complex (OEC), the ion environment of oxygen evolution and protect the OEC against heat-induced inactivation. This chain is Photosystem II extrinsic protein U, chloroplastic, found in Pyropia yezoensis (Susabi-nori).